A 217-amino-acid chain; its full sequence is MKYQLTAHEARVIGCLLEKQVTTPEQYPLSVNAVVTACNQKTNREPVMSLSESEVQALLDTLVKRHYLRTVSGFGNRVTKYEQRFCNSEFGDLKLSAGEVAVVTTLLLRGAQTPGELRSRAQRMYEFSDMAEVESVLEGLATREDGPFVARLPREPGKRESRYMHLFCDDMDTLITTVEALAPLDDDGDLRARVEALEGEVAELKARLDSLLHHLGD.

It belongs to the UPF0502 family.

The chain is UPF0502 protein KPN78578_10500 from Klebsiella pneumoniae subsp. pneumoniae (strain ATCC 700721 / MGH 78578).